The following is a 125-amino-acid chain: Succinate dehydrogenase assembly factor 3, mitochondrial (125 aa).

A mitochondrion-targeting transit peptide spans 1 to 30 (MTGRHVSRVRSLYRRILQLHRALPPDLKAL).

This sequence belongs to the complex I LYR family. SDHAF3 subfamily. In terms of assembly, interacts with Sdhb within an Sdha-Sdhb subcomplex.

The protein resides in the mitochondrion matrix. Its function is as follows. Plays an essential role in the assembly of succinate dehydrogenase (SDH), an enzyme complex (also referred to as respiratory complex II) that is a component of both the tricarboxylic acid (TCA) cycle and the mitochondrial electron transport chain, and which couples the oxidation of succinate to fumarate with the reduction of ubiquinone (coenzyme Q) to ubiquinol. Promotes maturation of the iron-sulfur protein subunit Sdhb of the SDH catalytic dimer, protecting it from the deleterious effects of oxidants. May act together with SDHAF1. This Rattus norvegicus (Rat) protein is Succinate dehydrogenase assembly factor 3, mitochondrial.